A 181-amino-acid chain; its full sequence is Adenine phosphoribosyltransferase (181 aa).

This sequence belongs to the purine/pyrimidine phosphoribosyltransferase family. As to quaternary structure, homodimer.

The protein localises to the cytoplasm. It carries out the reaction AMP + diphosphate = 5-phospho-alpha-D-ribose 1-diphosphate + adenine. Its pathway is purine metabolism; AMP biosynthesis via salvage pathway; AMP from adenine: step 1/1. Catalyzes a salvage reaction resulting in the formation of AMP, that is energically less costly than de novo synthesis. This Brucella suis (strain ATCC 23445 / NCTC 10510) protein is Adenine phosphoribosyltransferase.